A 735-amino-acid chain; its full sequence is MKKPLNSAEEKKTGDITKAEIEAIKSGLHSNPFALLGVHETPEGFSARCFIPGAEEVSVLTLDGNFVGELKQIDPDGFFEGRIDLSKRQPVRYRACRDDAEWAVTDPYSFGPVLGPMDDYFVREGSHLRLFDRMGAHPLKLEGVEGFHFAVWAPNARRVSVVGDFNNWDGRRHVMRFRKDTGIWEIFAPDVYAGCAYKFEILGANGELLPLKADPYARRGELRPKNASVTAPELTQKWEDQAHREHWAQVDQRRQPISIYEVHAGSWQRREDGTFLSWDELAAQLIPYCTDMGFTHIEFLPITEHPYDPSWGYQTTGLYAPTARFGDPEGFARFVNGAHKVGIGVLLDWVPAHFPTDEHGLRWFDGTALYEHADPRQGFHPDWNTAIYNFGRIEVMSYLINNALYWAEKFHLDGLRVDAVASMLYLDYSRKEGEWIPNEYGGRENLESVRFLQKMNSLVYGTHPGVMTIAEESTSWPKVSQPVHEGGLGFGFKWNMGFMHDTLSYFSREPVHRKFHHQELTFGLLYAFTENFVLPLSHDEVVHGKGSLIAKMSGDDWQKFANLRSYYGFMWGYPGKKLLFMGQEFAQWSEWSEKGSLDWNLRQYPMHEGMRRLVRDLNLTYRSKAALHARDCEPDGFRWLVVDDHENSVFAWLRTAPGEKPVAVICNLTPVYRENYYVPLPVAGRWREILNTDAEIYGGSGKGNGGRVQAVDAGGEIGAMLVLPPLATIMLEPEN.

Catalysis depends on D418, which acts as the Nucleophile. Catalysis depends on E471, which acts as the Proton donor.

The protein belongs to the glycosyl hydrolase 13 family. GlgB subfamily. As to quaternary structure, monomer.

The catalysed reaction is Transfers a segment of a (1-&gt;4)-alpha-D-glucan chain to a primary hydroxy group in a similar glucan chain.. Its pathway is glycan biosynthesis; glycogen biosynthesis. Functionally, catalyzes the formation of the alpha-1,6-glucosidic linkages in glycogen by scission of a 1,4-alpha-linked oligosaccharide from growing alpha-1,4-glucan chains and the subsequent attachment of the oligosaccharide to the alpha-1,6 position. The protein is 1,4-alpha-glucan branching enzyme GlgB of Agrobacterium fabrum (strain C58 / ATCC 33970) (Agrobacterium tumefaciens (strain C58)).